The sequence spans 653 residues: Translation factor GUF1, mitochondrial (653 aa).

Positions 56–236 (ENYRNFSIVA…SIIKNIPAPN (181 aa)) constitute a tr-type G domain. GTP is bound by residues 65 to 72 (AHVDHGKS), 129 to 133 (DTPGH), and 183 to 186 (NKID).

Belongs to the TRAFAC class translation factor GTPase superfamily. Classic translation factor GTPase family. LepA subfamily.

It is found in the mitochondrion inner membrane. It catalyses the reaction GTP + H2O = GDP + phosphate + H(+). Functionally, promotes mitochondrial protein synthesis. May act as a fidelity factor of the translation reaction, by catalyzing a one-codon backward translocation of tRNAs on improperly translocated ribosomes. Binds to mitochondrial ribosomes in a GTP-dependent manner. The protein is Translation factor GUF1, mitochondrial of Candida tropicalis (strain ATCC MYA-3404 / T1) (Yeast).